The following is a 449-amino-acid chain: Glucose-6-phosphate isomerase (449 aa).

E291 acts as the Proton donor in catalysis. Residues H312 and K426 contribute to the active site.

The protein belongs to the GPI family.

The protein resides in the cytoplasm. The enzyme catalyses alpha-D-glucose 6-phosphate = beta-D-fructose 6-phosphate. It participates in carbohydrate biosynthesis; gluconeogenesis. It functions in the pathway carbohydrate degradation; glycolysis; D-glyceraldehyde 3-phosphate and glycerone phosphate from D-glucose: step 2/4. Functionally, catalyzes the reversible isomerization of glucose-6-phosphate to fructose-6-phosphate. The chain is Glucose-6-phosphate isomerase from Streptococcus pneumoniae (strain CGSP14).